The following is a 152-amino-acid chain: Ubiquitin-conjugating enzyme E2 W (152 aa).

Met-1 participates in a covalent cross-link: Peptide (Met-Gly) (interchain with G-Cter in ubiquitin). A UBC core domain is found at 4-152 (AATRRLMKEL…TRWWFHDDSV (149 aa)). Residue Cys-92 is the Glycyl thioester intermediate of the active site.

This sequence belongs to the ubiquitin-conjugating enzyme family.

It carries out the reaction S-ubiquitinyl-[E1 ubiquitin-activating enzyme]-L-cysteine + [E2 ubiquitin-conjugating enzyme]-L-cysteine = [E1 ubiquitin-activating enzyme]-L-cysteine + S-ubiquitinyl-[E2 ubiquitin-conjugating enzyme]-L-cysteine.. It catalyses the reaction S-ubiquitinyl-[E1 ubiquitin-activating enzyme]-L-cysteine + [acceptor protein]-N-terminal-amino acid = [E1 ubiquitin-activating enzyme]-L-cysteine + N-terminal-ubiquitinyl-[acceptor protein].. It participates in protein modification; protein ubiquitination. In terms of biological role, accepts ubiquitin from the E1 complex and catalyzes its covalent attachment to other proteins. Together with ubc-18, required for the ubiquitination of membranous organelles, and the removal of paternal mitochondria from early embryos. The chain is Ubiquitin-conjugating enzyme E2 W from Caenorhabditis elegans.